Reading from the N-terminus, the 235-residue chain is Small ribosomal subunit protein eS4 (235 aa).

Residues 38 to 99 form the S4 RNA-binding domain; the sequence is VTLLTIIRDY…GESYRVVYNN (62 aa).

The protein belongs to the eukaryotic ribosomal protein eS4 family.

The chain is Small ribosomal subunit protein eS4 (rps4e) from Thermoplasma volcanium (strain ATCC 51530 / DSM 4299 / JCM 9571 / NBRC 15438 / GSS1).